A 141-amino-acid chain; its full sequence is Sec-independent protein translocase protein TatB (141 aa).

The chain crosses the membrane as a helical span at residues 2 to 22 (FANVGWGEMLVLVIAGLVILG). Positions 92-141 (IFTGRFDSTSSDQPGSGKPPKPQSGPGPAAASGPAATTTPASTPFDPDAT) are disordered. Residues 117-141 (PGPAAASGPAATTTPASTPFDPDAT) are compositionally biased toward low complexity.

Belongs to the TatB family. As to quaternary structure, the Tat system comprises two distinct complexes: a TatABC complex, containing multiple copies of TatA, TatB and TatC subunits, and a separate TatA complex, containing only TatA subunits. Substrates initially bind to the TatABC complex, which probably triggers association of the separate TatA complex to form the active translocon.

It localises to the cell membrane. Its function is as follows. Part of the twin-arginine translocation (Tat) system that transports large folded proteins containing a characteristic twin-arginine motif in their signal peptide across membranes. Together with TatC, TatB is part of a receptor directly interacting with Tat signal peptides. TatB may form an oligomeric binding site that transiently accommodates folded Tat precursor proteins before their translocation. In Mycolicibacterium gilvum (strain PYR-GCK) (Mycobacterium gilvum (strain PYR-GCK)), this protein is Sec-independent protein translocase protein TatB.